Reading from the N-terminus, the 334-residue chain is Glycerol-3-phosphate dehydrogenase [NAD(P)+] (334 aa).

Residues serine 14, tyrosine 15, histidine 35, and lysine 109 each coordinate NADPH. Sn-glycerol 3-phosphate is bound by residues lysine 109, glycine 138, and threonine 140. Alanine 142 is an NADPH binding site. Residues lysine 194, aspartate 247, serine 257, arginine 258, and asparagine 259 each contribute to the sn-glycerol 3-phosphate site. Residue lysine 194 is the Proton acceptor of the active site. An NADPH-binding site is contributed by arginine 258. Valine 282 and glutamate 284 together coordinate NADPH.

It belongs to the NAD-dependent glycerol-3-phosphate dehydrogenase family.

Its subcellular location is the cytoplasm. It catalyses the reaction sn-glycerol 3-phosphate + NAD(+) = dihydroxyacetone phosphate + NADH + H(+). The catalysed reaction is sn-glycerol 3-phosphate + NADP(+) = dihydroxyacetone phosphate + NADPH + H(+). The protein operates within membrane lipid metabolism; glycerophospholipid metabolism. In terms of biological role, catalyzes the reduction of the glycolytic intermediate dihydroxyacetone phosphate (DHAP) to sn-glycerol 3-phosphate (G3P), the key precursor for phospholipid synthesis. The polypeptide is Glycerol-3-phosphate dehydrogenase [NAD(P)+] (Psychromonas ingrahamii (strain DSM 17664 / CCUG 51855 / 37)).